Reading from the N-terminus, the 245-residue chain is Outer dense fiber protein 1 (245 aa).

Residues serine 5 and serine 10 each carry the phosphoserine modification. Residues 34–38 form repeat 1; sequence RCLCD. The interval 34 to 78 is 2 X 5 AA repeats of [RC]-C-L-C-D; sequence RCLCDLYMHPYCCCDLHPYPYCLCYSKRSRSCGLCDLYYPCCLCD. A Phosphoserine modification is found at serine 64. Residues 74 to 78 form repeat 2; sequence CCLCD. A phosphoserine mark is found at serine 87, serine 108, serine 109, serine 137, serine 153, serine 175, and serine 180. The interval 195 to 233 is C-X-P repeat region; it reads CNPCNPCSPCSPCGPCGPCGPCGPCGPCGPCDPCNPCYP.

In terms of assembly, interacts (via leucine zipper motif) with TCP11. Interacts with SPAG4. Interacts with KLC3. Interacts with CCDC42. In terms of tissue distribution, testis. Specifically located to the round spermatid layer and to the luminally-oriented cytoplasm of elongated spermatids.

The protein localises to the cell projection. The protein resides in the cilium. It is found in the flagellum. It localises to the cytoplasm. Its subcellular location is the cytoskeleton. The protein localises to the microtubule organizing center. The protein resides in the centrosome. Its function is as follows. Component of the outer dense fibers (ODF) of spermatozoa. ODF are filamentous structures located on the outside of the axoneme in the midpiece and principal piece of the mammalian sperm tail and may help to maintain the passive elastic structures and elastic recoil of the sperm tail. The protein is Outer dense fiber protein 1 (Odf1) of Rattus norvegicus (Rat).